The sequence spans 168 residues: Photosystem I assembly protein Ycf3 (168 aa).

3 TPR repeats span residues 35–68 (AFTY…EIDP), 72–105 (SYIL…NPFL), and 120–153 (GEQA…TPGN).

The protein belongs to the Ycf3 family.

It is found in the plastid. Its subcellular location is the chloroplast thylakoid membrane. Functionally, essential for the assembly of the photosystem I (PSI) complex. May act as a chaperone-like factor to guide the assembly of the PSI subunits. The chain is Photosystem I assembly protein Ycf3 from Drimys granadensis.